Here is a 341-residue protein sequence, read N- to C-terminus: L-threonine 3-dehydrogenase (341 aa).

Residue Cys-38 participates in Zn(2+) binding. Active-site charge relay system residues include Thr-40 and His-43. Zn(2+) contacts are provided by His-63, Glu-64, Cys-93, Cys-96, Cys-99, and Cys-107. NAD(+) is bound by residues Ile-175, Asp-195, Arg-200, 262 to 264, and 286 to 287; these read LGI and IY.

It belongs to the zinc-containing alcohol dehydrogenase family. Homotetramer. The cofactor is Zn(2+).

Its subcellular location is the cytoplasm. It catalyses the reaction L-threonine + NAD(+) = (2S)-2-amino-3-oxobutanoate + NADH + H(+). Its pathway is amino-acid degradation; L-threonine degradation via oxydo-reductase pathway; glycine from L-threonine: step 1/2. In terms of biological role, catalyzes the NAD(+)-dependent oxidation of L-threonine to 2-amino-3-ketobutyrate. The sequence is that of L-threonine 3-dehydrogenase from Escherichia coli (strain K12 / MC4100 / BW2952).